Reading from the N-terminus, the 688-residue chain is MASVASARWLRVSCGLCVPLTARRAGPCGRTPSSRFYSGSAAVPKDEGADIAGTEEVVIPKKKTWDKVAVLQALASTVHRDTTAAPYAFQDDPYLIPTSSVESHSFLLAKKSGENAAKFIINSYPKYFQKDIAEPHIPCLMPEYFEPQIEEISEAALQERIKLKKVKASVDIFDQLLQAGTTVSLETTNSLLDLLCYYGNQEPSTNYNFQQHEQTEELEEAEEGDNMKSKKKAGHQLGVTWRARNHAERIFALMPEKNAHSYCTMIRGMVKHRAHTQALSMYTELLNNRLRADVHTFNSLIEATALVVNAKFEEKWNNILDLLKQMVAQNVKPNLQTFNTILKCLRRFYAFGKLPALQTFREMKAIGIEPSLATYHHIIQLFYQHESPSKGSSLIIYDIMDEITGKTFSPKDPDDDMFFQSAMRVCSSLRDLELAYQVHGLLNTGDNRKFIGPDPRRNFYYSKFFSLLCLMEQIDVTLKWYKDLIPSVFFPHSQTLIDLLQALDVANRLEMIPQIWKDSKEYGHTFRSDLKEEILMLMARDQHPPELQAAFADCAADIKSTYESQDARQTASEWPANSLNYIAILFLRAGRTQEAWKMLGLFRKHNKIPRNELLNEFMDSAKASSSPAQAVEVVKLANSFSLPICEGLTQRLTADFTLSQEQKEALGDLTALTSDSESDSDSDTSKDK.

Residues 1 to 37 (MASVASARWLRVSCGLCVPLTARRAGPCGRTPSSRFY) constitute a mitochondrion transit peptide. Residue lysine 126 is modified to N6-acetyllysine. PPR repeat units lie at residues 149–183 (IEEI…GTTV), 184–219 (SLET…EELE), 258–292 (NAHS…RLRA), 293–333 (DVHT…NVKP), 334–370 (NLQT…GIEP), 371–412 (SLAT…SPKD), 415–449 (DDMF…DNRK), 457–491 (RNFY…VFFP), 492–526 (HSQT…GHTF), and 575–609 (PANS…NKIP). Residues 667–688 (GDLTALTSDSESDSDSDTSKDK) form a disordered region.

It belongs to the mitochondrion-specific ribosomal protein mS39 family. In terms of assembly, component of the mitochondrial ribosome small subunit (28S) which comprises a 12S rRNA and about 30 distinct proteins. Associated with the 12S mitochondrial rRNA (12S mt-rRNA).

It localises to the mitochondrion. Functionally, mitochondrial RNA-binding protein that has a role in mitochondrial translation. The chain is Small ribosomal subunit protein mS39 (PTCD3) from Bos taurus (Bovine).